The following is a 212-amino-acid chain: Translation initiation factor IF-3 (212 aa).

Residues 171 to 212 (PKSASKKGHTPPKTQVEASKQANESAETEEEKKRCHPTKPVL) are disordered. Positions 182-195 (PKTQVEASKQANES) are enriched in polar residues.

The protein belongs to the IF-3 family. As to quaternary structure, monomer.

It is found in the cytoplasm. Its function is as follows. IF-3 binds to the 30S ribosomal subunit and shifts the equilibrium between 70S ribosomes and their 50S and 30S subunits in favor of the free subunits, thus enhancing the availability of 30S subunits on which protein synthesis initiation begins. The sequence is that of Translation initiation factor IF-3 from Porphyromonas gingivalis (strain ATCC 33277 / DSM 20709 / CIP 103683 / JCM 12257 / NCTC 11834 / 2561).